Here is a 508-residue protein sequence, read N- to C-terminus: GMP synthase [glutamine-hydrolyzing] (508 aa).

Residues methionine 1–threonine 189 form the Glutamine amidotransferase type-1 domain. Cysteine 78 (nucleophile) is an active-site residue. Residues histidine 163 and glutamate 165 contribute to the active site. Residues tryptophan 190–histidine 383 enclose the GMPS ATP-PPase domain. Residue serine 217 to threonine 223 coordinates ATP.

In terms of assembly, homodimer.

The enzyme catalyses XMP + L-glutamine + ATP + H2O = GMP + L-glutamate + AMP + diphosphate + 2 H(+). Its pathway is purine metabolism; GMP biosynthesis; GMP from XMP (L-Gln route): step 1/1. In terms of biological role, catalyzes the synthesis of GMP from XMP. The polypeptide is GMP synthase [glutamine-hydrolyzing] (Helicobacter pylori (strain G27)).